The following is a 218-amino-acid chain: MRLRKKPWARPALEACSFFVINPTEYKGKWREVFGNSNEIWLELGCGKGGFISKLASTNPDKNFIAVDIKDEVLALAMKKIENEYALIGAETKNIRLMAHEIMLIHRMLDENDQIGRIFINFCNPWPKNRHKARRLTHPNQLNQYRTFLAPNGQIWFKTDDTMLFQDSIKYFEQCNFNIVYLTEDLHASGFEGNIETEHERMFLEQGCKIKFLIAEKK.

Residues E43, D68, E101, and N124 each contribute to the S-adenosyl-L-methionine site. Positions 128 and 160 each coordinate substrate.

The protein belongs to the class I-like SAM-binding methyltransferase superfamily. TrmB family.

The enzyme catalyses guanosine(46) in tRNA + S-adenosyl-L-methionine = N(7)-methylguanosine(46) in tRNA + S-adenosyl-L-homocysteine. It participates in tRNA modification; N(7)-methylguanine-tRNA biosynthesis. Its function is as follows. Catalyzes the formation of N(7)-methylguanine at position 46 (m7G46) in tRNA. This chain is tRNA (guanine-N(7)-)-methyltransferase, found in Acetivibrio thermocellus (strain ATCC 27405 / DSM 1237 / JCM 9322 / NBRC 103400 / NCIMB 10682 / NRRL B-4536 / VPI 7372) (Clostridium thermocellum).